A 387-amino-acid polypeptide reads, in one-letter code: EP300-interacting inhibitor of differentiation 3 (387 aa).

The span at 1–19 (MSEEKCSLTGGEEKGEELA) shows a compositional bias: basic and acidic residues. The interval 1–77 (MSEEKCSLTG…SDDLSPEAPC (77 aa)) is disordered. The span at 32-72 (EEDDDDDEEALKKEEEEEEEEEEEDEEEEEEGPDSSSDDLS) shows a compositional bias: acidic residues.

Belongs to the NSE4 family. As to quaternary structure, component of the SMC5-SMC6 complex which consists at least of SMC5, SMC6, NSMCE2, NSMCE1, NSMCE4A or EID3 and NSMCE3. NSMCE1, NSMCE4A or EID3 and NSMCE3 probably form a subcomplex that bridges the head domains of the SMC5:SMC6 heterodimer. Homodimer, and heterodimer with EID2. Interacts with the C-terminal region of CREBBP.

It is found in the nucleus. The protein localises to the cytoplasm. The protein resides in the chromosome. Its subcellular location is the telomere. Its function is as follows. Tissue-specific component of the SMC5-SMC6 complex, a complex involved in repair of DNA double-strand breaks by homologous recombination. The complex may promote sister chromatid homologous recombination by recruiting the SMC1-SMC3 cohesin complex to double-strand breaks. The complex is required for telomere maintenance via recombination and mediates sumoylation of shelterin complex (telosome) components. In terms of biological role, acts as a repressor of nuclear receptor-dependent transcription possibly by interfering with CREBBP-dependent coactivation. May function as a coinhibitor of other CREBBP/EP300-dependent transcription factors. The protein is EP300-interacting inhibitor of differentiation 3 of Rattus norvegicus (Rat).